The primary structure comprises 251 residues: Triosephosphate isomerase (251 aa).

8 to 10 (NWK) is a substrate binding site. His97 acts as the Electrophile in catalysis. Glu170 (proton acceptor) is an active-site residue. Residues Gly176, Ser215, and 236-237 (GG) each bind substrate.

Belongs to the triosephosphate isomerase family. Homodimer.

It localises to the cytoplasm. It carries out the reaction D-glyceraldehyde 3-phosphate = dihydroxyacetone phosphate. Its pathway is carbohydrate biosynthesis; gluconeogenesis. The protein operates within carbohydrate degradation; glycolysis; D-glyceraldehyde 3-phosphate from glycerone phosphate: step 1/1. Functionally, involved in the gluconeogenesis. Catalyzes stereospecifically the conversion of dihydroxyacetone phosphate (DHAP) to D-glyceraldehyde-3-phosphate (G3P). The polypeptide is Triosephosphate isomerase (Nitratidesulfovibrio vulgaris (strain DSM 19637 / Miyazaki F) (Desulfovibrio vulgaris)).